We begin with the raw amino-acid sequence, 544 residues long: MAKDIYFNEDARKSLLSGIEKLSNAVKVTLGPKGRNVLIDKKFGSPIVTKDGVSVAREIDLENSFENMGAQLLKEVAIKTNDLAGDGTTTATVLAYAIAREGLKNVSSGINPIGIKKGIDHAVALAAEKIRKSAKKITTKEEIAQVASISANNDTSIGEKIAEAMDRVGKDGVITVEESKTFDTTISYVEGMQFDRGYLSPYFSTNKENMSVSFDDTYILICEKKISTIKELLPVLEKVVNTNKPLLIIAEDIEGDALAALVLNSVRGALKVCAIKAPGFGDRRKAMLEDIAILTGGVLVSEELGLTLENVELEQLGQAKSVKVDKDNTTIINTGNREQIRERAELIKKQIEETSSEYDKEKLQERLAKLVGGVAVINVGAVTEVELKEKKHRVEDALSATRAAVEEGVVPGGGSTLIEVAMYLDTVDVSKLSYEEKQGFEIVKRSLEEPMRQIISNAGFESSIYIHQIKTDKKGLGFDAASFKWVNMIESGIIDPAKVTRSALQNAASIAGLLLTTECAITEIKEEKNSAGGNYPMDPGMGMM.

ATP contacts are provided by residues 29–32, Lys-50, 86–90, Gly-413, 479–481, and Asp-495; these read TLGP, DGTTT, and DAA.

This sequence belongs to the chaperonin (HSP60) family. As to quaternary structure, forms a cylinder of 14 subunits composed of two heptameric rings stacked back-to-back. Interacts with the co-chaperonin GroES.

It localises to the cytoplasm. It catalyses the reaction ATP + H2O + a folded polypeptide = ADP + phosphate + an unfolded polypeptide.. In terms of biological role, together with its co-chaperonin GroES, plays an essential role in assisting protein folding. The GroEL-GroES system forms a nano-cage that allows encapsulation of the non-native substrate proteins and provides a physical environment optimized to promote and accelerate protein folding. This Borrelia duttonii (strain Ly) protein is Chaperonin GroEL.